The primary structure comprises 274 residues: Large ribosomal subunit protein uL2 (274 aa).

2 disordered regions span residues 28-54 (APHAPLLEKKSKSGGRNNNGRITTRHI) and 224-274 (VAMN…RRRK). Positions 263–274 (KRTDKMIVRRRK) are enriched in basic and acidic residues.

Belongs to the universal ribosomal protein uL2 family. As to quaternary structure, part of the 50S ribosomal subunit. Forms a bridge to the 30S subunit in the 70S ribosome.

Its function is as follows. One of the primary rRNA binding proteins. Required for association of the 30S and 50S subunits to form the 70S ribosome, for tRNA binding and peptide bond formation. It has been suggested to have peptidyltransferase activity; this is somewhat controversial. Makes several contacts with the 16S rRNA in the 70S ribosome. The chain is Large ribosomal subunit protein uL2 from Pseudomonas savastanoi pv. phaseolicola (strain 1448A / Race 6) (Pseudomonas syringae pv. phaseolicola (strain 1448A / Race 6)).